The primary structure comprises 58 residues: Large ribosomal subunit protein bL32 (58 aa).

The span at 1-15 (MAVPKKKTSKAKRNQ) shows a compositional bias: basic residues. The segment at 1 to 23 (MAVPKKKTSKAKRNQRSATWKGK) is disordered.

This sequence belongs to the bacterial ribosomal protein bL32 family.

This is Large ribosomal subunit protein bL32 from Parasynechococcus marenigrum (strain WH8102).